We begin with the raw amino-acid sequence, 103 residues long: Small ribosomal subunit protein uS10 (103 aa).

The protein belongs to the universal ribosomal protein uS10 family. In terms of assembly, part of the 30S ribosomal subunit.

In terms of biological role, involved in the binding of tRNA to the ribosomes. The chain is Small ribosomal subunit protein uS10 from Laribacter hongkongensis (strain HLHK9).